Consider the following 545-residue polypeptide: CTP synthase (545 aa).

Residues 1-266 (MKTNYIFVTG…DDYICKRFSL (266 aa)) form an amidoligase domain region. Serine 14 lines the CTP pocket. UTP is bound at residue serine 14. ATP contacts are provided by residues 15–20 (SLGKGI) and aspartate 72. Residues aspartate 72 and glutamate 140 each contribute to the Mg(2+) site. Residues 147-149 (DIE), 187-192 (KTKPTQ), and lysine 223 each bind CTP. UTP is bound by residues 187-192 (KTKPTQ) and lysine 223. 239 to 241 (KDV) lines the ATP pocket. A Glutamine amidotransferase type-1 domain is found at 291–542 (TIGMVGKYVE…VKAAFDYQKG (252 aa)). L-glutamine is bound at residue glycine 352. Cysteine 379 (nucleophile; for glutamine hydrolysis) is an active-site residue. Residues 380-383 (LGMQ), glutamate 403, and arginine 470 contribute to the L-glutamine site. Residues histidine 515 and glutamate 517 contribute to the active site.

This sequence belongs to the CTP synthase family. In terms of assembly, homotetramer.

The enzyme catalyses UTP + L-glutamine + ATP + H2O = CTP + L-glutamate + ADP + phosphate + 2 H(+). The catalysed reaction is L-glutamine + H2O = L-glutamate + NH4(+). It catalyses the reaction UTP + NH4(+) + ATP = CTP + ADP + phosphate + 2 H(+). Its pathway is pyrimidine metabolism; CTP biosynthesis via de novo pathway; CTP from UDP: step 2/2. Its activity is regulated as follows. Allosterically activated by GTP, when glutamine is the substrate; GTP has no effect on the reaction when ammonia is the substrate. The allosteric effector GTP functions by stabilizing the protein conformation that binds the tetrahedral intermediate(s) formed during glutamine hydrolysis. Inhibited by the product CTP, via allosteric rather than competitive inhibition. Functionally, catalyzes the ATP-dependent amination of UTP to CTP with either L-glutamine or ammonia as the source of nitrogen. Regulates intracellular CTP levels through interactions with the four ribonucleotide triphosphates. The protein is CTP synthase of Proteus mirabilis (strain HI4320).